The chain runs to 390 residues: Small ribosomal subunit protein uS9m (390 aa).

The interval proline 368–arginine 390 is disordered.

It belongs to the universal ribosomal protein uS9 family. As to quaternary structure, component of the mitochondrial ribosome small subunit (28S) which comprises a 12S rRNA and about 30 distinct proteins.

The protein resides in the mitochondrion. In Mus musculus (Mouse), this protein is Small ribosomal subunit protein uS9m (Mrps9).